A 499-amino-acid polypeptide reads, in one-letter code: Rhamnogalacturonan I rhamnosyltransferase 1 (499 aa).

Residues W31–A50 traverse the membrane as a helical; Signal-anchor for type II membrane protein segment. N-linked (GlcNAc...) asparagine glycosylation is found at N88, N121, and N207. H261–R263 is a binding site for substrate. Residues N375, N435, and N496 are each glycosylated (N-linked (GlcNAc...) asparagine).

The protein belongs to the glycosyltransferase GT106 family.

Its subcellular location is the golgi apparatus membrane. It catalyses the reaction alpha-D-galacturonosyl-[(1-&gt;2)-alpha-L-rhamnosyl-(1-&gt;4)-alpha-D-galacturonosyl](n) + UDP-beta-L-rhamnose = [(1-&gt;2)-alpha-L-rhamnosyl-(1-&gt;4)-alpha-D-galacturonosyl](n+1) + UDP + H(+). Its pathway is glycan metabolism; pectin biosynthesis. Its function is as follows. Glycosyltransferase involved in the formation of rhamnogalacturonan I (RG-I) oligosaccharides in the seed coat mucilage, which is a specialized cell wall with abundant RG-I. Transfers the rhamnose residue from UDP-beta-L-rhamnose to RG-I oligosaccharides. The chain is Rhamnogalacturonan I rhamnosyltransferase 1 from Arabidopsis thaliana (Mouse-ear cress).